Consider the following 548-residue polypeptide: MKKVTAMLFSMAVGLNAVSMAAKVKASEEQETDVLLIGGGIMSATLGTYLRELEPEWSMTMVERLEGVAQESSNGWNNAGTGHSALMELNYTPQNVDGSISIEKAVAINEAFQISRQFWAHQVERGVLRTPRSFINTVPHMSFVWGEDNVNFLRARYAALQQSSLFRGMRYSEDHAQIKEWAPLVMEGRDPQQKVAATRTEIGTDVNYGEITRQLIASLQKKSNFSLQLSSEVRALKRNDDNSWTVTVADLKNGTAQNIRAKFVFIGAGGAALKLLQESGIPEAKDYAGFPVGGQFLVSENPDVVNHHLAKVYGKASVGAPPMSVPHIDTRVLDGKRVVLFGPFATFSTKFLKNGSLWDLMSSTTTSNVMPMMHVGLDNFDLVKYLVSQVMLSEEDRFEALKEYYPQAKKEDWRLWQAGQRVQIIKRDADKGGVLRLGTEVVSDQQGTIAALLGASPGASTAAPIMLNLLEKVFGDRVSSPQWQATLKAIVPSYGRKLNGDVAATERELQYTSEVLGLKYDKPQAVDSTPKPQLKPQLVQKEVADIAL.

The protein belongs to the MQO family. It depends on FAD as a cofactor.

It catalyses the reaction (S)-malate + a quinone = a quinol + oxaloacetate. It participates in carbohydrate metabolism; tricarboxylic acid cycle; oxaloacetate from (S)-malate (quinone route): step 1/1. This Escherichia coli O127:H6 (strain E2348/69 / EPEC) protein is Probable malate:quinone oxidoreductase.